The primary structure comprises 277 residues: Large ribosomal subunit protein uL2 (277 aa).

Disordered stretches follow at residues 1–58 (MGIR…GGGH) and 223–277 (GVVM…GKKR). Basic and acidic residues predominate over residues 23–33 (EITRSEPEKSL). Residues 37-58 (LHGRGGRNAHGKITTRHKGGGH) show a composition bias toward basic residues. Over residues 251–267 (GKPEGRTRRNKPSDKLI) the composition is skewed to basic and acidic residues. A compositionally biased stretch (basic residues) spans 268–277 (VRRRRTGKKR).

The protein belongs to the universal ribosomal protein uL2 family. In terms of assembly, part of the 50S ribosomal subunit. Forms a bridge to the 30S subunit in the 70S ribosome.

Functionally, one of the primary rRNA binding proteins. Required for association of the 30S and 50S subunits to form the 70S ribosome, for tRNA binding and peptide bond formation. It has been suggested to have peptidyltransferase activity; this is somewhat controversial. Makes several contacts with the 16S rRNA in the 70S ribosome. In Saccharopolyspora erythraea (strain ATCC 11635 / DSM 40517 / JCM 4748 / NBRC 13426 / NCIMB 8594 / NRRL 2338), this protein is Large ribosomal subunit protein uL2.